The sequence spans 137 residues: Probable 4-amino-4-deoxy-L-arabinose-phosphoundecaprenol flippase subunit ArnF (137 aa).

At 1–5 the chain is on the cytoplasmic side; sequence MSRAR. The chain crosses the membrane as a helical span at residues 6–26; it reads GFAFALGSVALVSGAQLGMRW. Over 27–49 the chain is Periplasmic; it reads SMTRLPAPDQWLPALSAGSVDLA. Residues 50–70 traverse the membrane as a helical segment; the sequence is ALAVVAAAIAAYALSMLCWLL. Over 71-80 the chain is Cytoplasmic; that stretch reads ALRDLPLGRA. The chain crosses the membrane as a helical span at residues 81–101; that stretch reads YSLLSISYALVYLLAASLPLF. Residue Asn102 is a topological domain, periplasmic. The chain crosses the membrane as a helical span at residues 103–123; it reads EPFTLSKTLGVALVILGVITI. Over 124–137 the chain is Cytoplasmic; the sequence is NSRSAPATSPRNTP.

It belongs to the ArnF family. In terms of assembly, heterodimer of ArnE and ArnF.

Its subcellular location is the cell inner membrane. It functions in the pathway bacterial outer membrane biogenesis; lipopolysaccharide biosynthesis. Functionally, translocates 4-amino-4-deoxy-L-arabinose-phosphoundecaprenol (alpha-L-Ara4N-phosphoundecaprenol) from the cytoplasmic to the periplasmic side of the inner membrane. The polypeptide is Probable 4-amino-4-deoxy-L-arabinose-phosphoundecaprenol flippase subunit ArnF (Pseudomonas fluorescens (strain ATCC BAA-477 / NRRL B-23932 / Pf-5)).